The chain runs to 476 residues: Cysteine--tRNA ligase (476 aa).

Cys30 serves as a coordination point for Zn(2+). Positions 32–42 match the 'HIGH' region motif; that stretch reads PTVYNYIHIGN. Cys215, His240, and Glu244 together coordinate Zn(2+). The short motif at 274–278 is the 'KMSKS' region element; sequence KMSKS. Lys277 serves as a coordination point for ATP.

The protein belongs to the class-I aminoacyl-tRNA synthetase family. As to quaternary structure, monomer. Requires Zn(2+) as cofactor.

The protein localises to the cytoplasm. It catalyses the reaction tRNA(Cys) + L-cysteine + ATP = L-cysteinyl-tRNA(Cys) + AMP + diphosphate. The sequence is that of Cysteine--tRNA ligase from Lactobacillus helveticus (strain DPC 4571).